A 220-amino-acid chain; its full sequence is 1-Cys peroxiredoxin A (220 aa).

One can recognise a Thioredoxin domain in the interval 4 to 165 (LTIGDTVPNL…VVRAVDALQT (162 aa)). Cys-46 serves as the catalytic Cysteine sulfenic acid (-SOH) intermediate. Positions 195-218 (KEKFPQGFDTADLPSGKGYLRFTK) match the Bipartite nuclear localization signal motif.

The protein belongs to the peroxiredoxin family. Prx6 subfamily.

Its subcellular location is the nucleus. The protein resides in the cytoplasm. The catalysed reaction is a hydroperoxide + [thioredoxin]-dithiol = an alcohol + [thioredoxin]-disulfide + H2O. Its function is as follows. Thiol-specific peroxidase that catalyzes the reduction of hydrogen peroxide and organic hydroperoxides to water and alcohols, respectively. Seems to contribute to the inhibition of germination during stress. This chain is 1-Cys peroxiredoxin A, found in Oryza sativa subsp. japonica (Rice).